A 451-amino-acid polypeptide reads, in one-letter code: Vacuolar cation/proton exchanger 1a (451 aa).

Residues 1 to 58 (MEAAAAMEAGRKLAARHPHGRSRTAHNMSSSSLRKKSDAALVRKVPVAPLRPLLANLQ) lie on the Cytoplasmic side of the membrane. A disordered region spans residues 9–37 (AGRKLAARHPHGRSRTAHNMSSSSLRKKS). Positions 13–24 (LAARHPHGRSRT) are enriched in basic residues. Residues 59-79 (EVFLATKLAVLFPAVPLAIAA) traverse the membrane as a helical segment. The Vacuolar portion of the chain corresponds to 80–86 (QCFRFDQ). A helical membrane pass occupies residues 87–107 (VWVFALSLLGLIPLAERVSFL). The Cytoplasmic segment spans residues 108–120 (TEQIALYTGPTVG). Residues 121–141 (GLLNATCGNATELIIALFALL) traverse the membrane as a helical segment. Residues 128 to 163 (GNATELIIALFALLKGKIEVVKCSLLGSVLSNLLLV) are cation selection. Topologically, residues 142–153 (KGKIEVVKCSLL) are vacuolar. The helical transmembrane segment at 154–174 (GSVLSNLLLVLGTSLFCGGVV) threads the bilayer. Residues 175–191 (NLGARQPYDRNQSDVST) are Cytoplasmic-facing. A helical transmembrane segment spans residues 192-212 (ALLFLAVLCHSAPLLLRYAVA). The Vacuolar portion of the chain corresponds to 213 to 228 (AGEHSVSATSAAASLD). Residues 229 to 249 (LSRACSFVMLASYVAYLFFQL) form a helical membrane-spanning segment. At 250-273 (KTHRQLFEPQEVDGGDAGDDDEEP) the chain is on the cytoplasmic side. Residues 274-294 (ALGFASALFWLALMTAVISVL) traverse the membrane as a helical segment. Over 295 to 317 (SEYVVGTIEPTSQSWGLSVSFIS) the chain is Vacuolar. The chain crosses the membrane as a helical span at residues 318–338 (IILLPIVGNAAEHAGAIIFAL). A cation selection region spans residues 325-360 (GNAAEHAGAIIFALKNKLDITLGVALGSATQISMFV). The Cytoplasmic portion of the chain corresponds to 339 to 352 (KNKLDITLGVALGS). A helical transmembrane segment spans residues 353 to 373 (ATQISMFVVPLSVLVAWIMGV). The Vacuolar portion of the chain corresponds to 374–378 (QMDLD). The helical transmembrane segment at 379-399 (FKLLETGSLFMAVLVTAFTLQ) threads the bilayer. Over 400 to 404 (DGTSH) the chain is Cytoplasmic. Residues 405–425 (YLKGILLLLCYIVIGACFFVA) traverse the membrane as a helical segment. At 426-451 (RQPAGHANSNGALLDVPTGSMSVQAA) the chain is on the vacuolar side.

It belongs to the Ca(2+):cation antiporter (CaCA) (TC 2.A.19) family. Cation/proton exchanger (CAX) subfamily. In terms of tissue distribution, ubiquitous.

The protein resides in the vacuole membrane. Vacuolar cation/proton exchanger (CAX). Translocates Ca(2+) and other metal ions into vacuoles using the proton gradient formed by H(+)-ATPase and H(+)-pyrophosphatase. This chain is Vacuolar cation/proton exchanger 1a (CAX1a), found in Oryza sativa subsp. japonica (Rice).